Here is a 344-residue protein sequence, read N- to C-terminus: 3-dehydroquinate synthase (344 aa).

NAD(+) is bound by residues 60-65 (DGEEYK), 94-98 (GVISD), 118-119 (TT), lysine 131, lysine 140, and 158-161 (FLNT). Zn(2+) is bound by residues glutamate 173, histidine 232, and histidine 249.

It belongs to the sugar phosphate cyclases superfamily. Dehydroquinate synthase family. Co(2+) is required as a cofactor. It depends on Zn(2+) as a cofactor. Requires NAD(+) as cofactor.

The protein localises to the cytoplasm. The catalysed reaction is 7-phospho-2-dehydro-3-deoxy-D-arabino-heptonate = 3-dehydroquinate + phosphate. Its pathway is metabolic intermediate biosynthesis; chorismate biosynthesis; chorismate from D-erythrose 4-phosphate and phosphoenolpyruvate: step 2/7. Functionally, catalyzes the conversion of 3-deoxy-D-arabino-heptulosonate 7-phosphate (DAHP) to dehydroquinate (DHQ). This is 3-dehydroquinate synthase from Campylobacter hominis (strain ATCC BAA-381 / DSM 21671 / CCUG 45161 / LMG 19568 / NCTC 13146 / CH001A).